A 144-amino-acid polypeptide reads, in one-letter code: DNA polymerase III subunit chi (144 aa).

This sequence belongs to the DNA polymerase III chi/HolC chain family. As to quaternary structure, DNA polymerase III contains a core (composed of alpha, epsilon and theta chains) that associates with a tau subunit. This core dimerizes to form the POLIII' complex. PolIII' associates with the gamma complex (composed of gamma, delta, delta', psi and chi chains) and with the beta chain to form the complete DNA polymerase III complex. Interacts directly with the psi subunit (holD). The only subunit of the DNA polymerase III holoenzyme known to interact with single-stranded DNA binding protein (SSB), interacts directly with DNA helicase YoaA.

It carries out the reaction DNA(n) + a 2'-deoxyribonucleoside 5'-triphosphate = DNA(n+1) + diphosphate. Part of the beta sliding clamp loading complex, which hydrolyzes ATP to load the beta clamp onto primed DNA to form the DNA replication pre-initiation complex. DNA polymerase III is a complex, multichain enzyme responsible for most of the replicative synthesis in bacteria. This DNA polymerase also exhibits 3' to 5' exonuclease activity. This subunit may stabilize YoaA and/or stimulate the helicase activity of YoaA. In Haemophilus influenzae (strain ATCC 51907 / DSM 11121 / KW20 / Rd), this protein is DNA polymerase III subunit chi (holC).